The following is a 98-amino-acid chain: MRALVEISDKQFFVTEGEKLFVPTQKAEAGDTLTFEKVLLQSDGAAASLSPSCKVTAKLLRHIKGDKVTVFKKKRRKRYRVTRGHRQGFSEIEILSVA.

The protein belongs to the bacterial ribosomal protein bL21 family. In terms of assembly, part of the 50S ribosomal subunit. Contacts protein L20.

Its function is as follows. This protein binds to 23S rRNA in the presence of protein L20. The chain is Large ribosomal subunit protein bL21 from Chloroherpeton thalassium (strain ATCC 35110 / GB-78).